The sequence spans 307 residues: NAD kinase (307 aa).

Asp-78 (proton acceptor) is an active-site residue. NAD(+) contacts are provided by residues 78 to 79 (DG), His-83, 154 to 155 (NE), Arg-165, Arg-182, Asp-184, and Gln-255.

It belongs to the NAD kinase family. A divalent metal cation serves as cofactor.

It is found in the cytoplasm. It catalyses the reaction NAD(+) + ATP = ADP + NADP(+) + H(+). In terms of biological role, involved in the regulation of the intracellular balance of NAD and NADP, and is a key enzyme in the biosynthesis of NADP. Catalyzes specifically the phosphorylation on 2'-hydroxyl of the adenosine moiety of NAD to yield NADP. The polypeptide is NAD kinase (Halorhodospira halophila (strain DSM 244 / SL1) (Ectothiorhodospira halophila (strain DSM 244 / SL1))).